The chain runs to 472 residues: Argininosuccinate lyase (472 aa).

The protein belongs to the lyase 1 family. Argininosuccinate lyase subfamily.

It localises to the cytoplasm. It catalyses the reaction 2-(N(omega)-L-arginino)succinate = fumarate + L-arginine. It functions in the pathway amino-acid biosynthesis; L-arginine biosynthesis; L-arginine from L-ornithine and carbamoyl phosphate: step 3/3. This chain is Argininosuccinate lyase, found in Polynucleobacter necessarius subsp. necessarius (strain STIR1).